We begin with the raw amino-acid sequence, 806 residues long: Minor extracellular protease Vpr (806 aa).

Positions 1–28 (MKKGIIRFLLVSFVLFFALSTGITGVQA) are cleaved as a signal peptide. Positions 29-160 (APASSKTSAD…TISEDAVSPQ (132 aa)) are excised as a propeptide. Residues 57–142 (TVIVELKEKS…AVYPNVTYKT (86 aa)) form the Inhibitor I9 domain. The Peptidase S8 domain maps to 158 to 597 (SPQMDDSAPY…ARIMNAIKAD (440 aa)). Active-site charge relay system residues include Asp189 and His233. Residues 383 to 461 (ELVEAGIGEA…KLSLEDGEKL (79 aa)) enclose the PA domain. Ser534 acts as the Charge relay system in catalysis.

This sequence belongs to the peptidase S8 family. Post-translationally, probably undergoes C-terminal processing or proteolysis. Auto-processed to form active enzymes of several different molecular weights.

The protein localises to the secreted. It is found in the cell wall. Its activity is regulated as follows. Activity is inhibited by phenylmethylsulfonyl fluoride (PMSF), but not by EDTA. Functionally, serine protease. Involved in the production of the competence and sporulation stimulating factor CSF. Is directly involved in the processing of pro-CSF to CSF. Can also cleave pro-PhrA to PhrA, but cannot cleave pro-PhrE. Shows fibrinolytic activity in vitro. Not essential for growth or sporulation. The protein is Minor extracellular protease Vpr of Bacillus subtilis (strain 168).